Consider the following 256-residue polypeptide: Triosephosphate isomerase (256 aa).

9-11 (NWK) contributes to the substrate binding site. Residue histidine 97 is the Electrophile of the active site. Glutamate 169 serves as the catalytic Proton acceptor. Substrate contacts are provided by residues glycine 175, serine 214, and 235-236 (GG).

This sequence belongs to the triosephosphate isomerase family. In terms of assembly, homodimer.

It is found in the cytoplasm. The catalysed reaction is D-glyceraldehyde 3-phosphate = dihydroxyacetone phosphate. It functions in the pathway carbohydrate biosynthesis; gluconeogenesis. It participates in carbohydrate degradation; glycolysis; D-glyceraldehyde 3-phosphate from glycerone phosphate: step 1/1. Involved in the gluconeogenesis. Catalyzes stereospecifically the conversion of dihydroxyacetone phosphate (DHAP) to D-glyceraldehyde-3-phosphate (G3P). The chain is Triosephosphate isomerase from Vibrio parahaemolyticus serotype O3:K6 (strain RIMD 2210633).